The primary structure comprises 291 residues: Ribose-phosphate pyrophosphokinase (291 aa).

Residues 34–36 and 92–93 each bind ATP; these read DGE and RQ. Mg(2+) is bound by residues histidine 125 and aspartate 165. The active site involves lysine 188. D-ribose 5-phosphate-binding residues include arginine 190 and aspartate 214.

This sequence belongs to the ribose-phosphate pyrophosphokinase family. Class III (archaeal) subfamily. Mg(2+) is required as a cofactor.

Its subcellular location is the cytoplasm. It catalyses the reaction D-ribose 5-phosphate + ATP = 5-phospho-alpha-D-ribose 1-diphosphate + AMP + H(+). It participates in metabolic intermediate biosynthesis; 5-phospho-alpha-D-ribose 1-diphosphate biosynthesis; 5-phospho-alpha-D-ribose 1-diphosphate from D-ribose 5-phosphate (route I): step 1/1. Its function is as follows. Involved in the biosynthesis of the central metabolite phospho-alpha-D-ribosyl-1-pyrophosphate (PRPP) via the transfer of pyrophosphoryl group from ATP to 1-hydroxyl of ribose-5-phosphate (Rib-5-P). The sequence is that of Ribose-phosphate pyrophosphokinase from Methanopyrus kandleri (strain AV19 / DSM 6324 / JCM 9639 / NBRC 100938).